Here is a 135-residue protein sequence, read N- to C-terminus: ARGOS-like protein (135 aa).

The tract at residues 71–122 (FSLESMVVLVGLTASLLILPLILPPLPPPPFMLLLIPIGIMVLLMVLAFMPS) is organ Size Related (OSR) domain. Transmembrane regions (helical) follow at residues 76–96 (MVVL…LPPL) and 100–120 (PFML…LAFM).

This sequence belongs to the plant organ size related (OSR) protein family. As to expression, expressed in cotyledons, roots, flowers, siliques and leaves.

Its subcellular location is the membrane. The protein localises to the nucleus. It is found in the cytoplasm. The protein resides in the endoplasmic reticulum. Its function is as follows. Promotes cell expansion-dependent organ growth, probably via a brassinosteroids signaling pathway. Acts downstream of BRI1. This is ARGOS-like protein (ARL) from Arabidopsis thaliana (Mouse-ear cress).